The sequence spans 766 residues: MEESNPAPTSCASKGKHSKVSDLISHFEGGSVLSSYTDVQKDSTMNLNIPQTPRQHGLTSTTPQKLPSHKSPQKQEKDSDQNQGQHGCLANGVAAAQSQMECETEKEAALSPETDTQTAAASPDAHVLNGVRNETTTDSASSVTNSHDENACDSSCRTQGTDLGLPSKEGEPVIEAELQERENGLSTEGLNPLDQHHEVKETNEQKLHKIATELLLTERAYVSRLNLLDQVFYCKLLEEANRGSFPAEMVNKIFSNISSINAFHSKFLLPELEKRMQEWETTPRIGDILQKLAPFLKMYGEYVKGFDNAVELVKNMTERVPQFKSVTEEIQKQKICGSLTLQHHMLEPIQRIPRYEMLLKDYLKKLSPDAPDWNDAKKSLEIISTAASHSNSAIRKMENLKKLLEIYEMLGEEEDIVNPSNELIKEGQILKLAARNTSAQERYLFLFNNMLLYCVPRFSLVGSKFTVRTRVGIDGMKIVETHNEEYPHTFQVSGKERTLELQASSEQDKEEWIKALQESIDAFHQRHETFRNAIAKENDIPLEVSTAELGKRAPRWIRDNEVTMCMKCKESFNALTRRRHHCRACGHVVCWKCSDYKAQLEYDGGRLNKVCKDCYQIMSGFAESEEKKRRGILEIESAEVSGNSEVCSFLQYMEKSKPWQKIWCVIPKQDPLVLYMYGAPQDVRAQATIPLLGYIVDDMPKSADLPHSFKLTQSKSVHSFAADSEELKQKWLKIILLAVTGETPDGPSEHLDTLDNLPGPKEKSEC.

Residues 1–150 (MEESNPAPTS…SSVTNSHDEN (150 aa)) are actin filament-binding. Composition is skewed to polar residues over residues 43–65 (STMN…TPQK), 132–145 (RNET…SVTN), and 152–161 (CDSSCRTQGT). The segment at 43–167 (STMNLNIPQT…TQGTDLGLPS (125 aa)) is disordered. A DH domain is found at 206–393 (KLHKIATELL…STAASHSNSA (188 aa)). A PH 1 domain is found at 422 to 521 (ELIKEGQILK…WIKALQESID (100 aa)). Residues 559–619 (DNEVTMCMKC…VCKDCYQIMS (61 aa)) form an FYVE-type zinc finger. Zn(2+) contacts are provided by cysteine 565, cysteine 568, cysteine 582, cysteine 585, cysteine 590, cysteine 593, cysteine 611, and cysteine 614. Residues 643–740 (NSEVCSFLQY…WLKIILLAVT (98 aa)) enclose the PH 2 domain. Phosphoserine occurs at positions 702 and 716. A disordered region spans residues 745-766 (DGPSEHLDTLDNLPGPKEKSEC).

As to quaternary structure, homooligomer. In terms of tissue distribution, detected in brain, lung, liver, skeletal muscle, kidney, testis and cultured hippocampal neurons.

The protein resides in the cytoplasm. Its subcellular location is the cytoskeleton. It localises to the cell projection. The protein localises to the filopodium. Its function is as follows. Activates CDC42, a member of the Ras-like family of Rho- and Rac proteins, by exchanging bound GDP for free GTP. Plays a role in regulating the actin cytoskeleton and cell shape. Activates MAPK8. This chain is FYVE, RhoGEF and PH domain-containing protein 4 (Fgd4), found in Rattus norvegicus (Rat).